Reading from the N-terminus, the 395-residue chain is Nucleoside diphosphate kinase homolog 7 (395 aa).

Residues glutamine 22 to lysine 110 form the DM10 domain.

The protein belongs to the NDK family. In terms of assembly, component of sperm flagellar doublet microtubules. Component of the gamma-tubulin ring complex. As to expression, widely expressed. Expressed in the flagellum of epididymal sperm but not in testicular sperm (at protein level).

The protein resides in the cytoplasm. Its subcellular location is the cytoskeleton. The protein localises to the microtubule organizing center. It localises to the centrosome. It is found in the nucleus. The protein resides in the spindle. Its subcellular location is the cilium axoneme. The protein localises to the flagellum axoneme. It localises to the cell projection. It is found in the cilium. Its function is as follows. Possesses an intrinsic kinase activity. Displays 3'-5' exonuclease activity with a preference for single-stranded DNA. Does not seem to have nucleoside diphosphate kinase activity. Functional component of the gamma-tubulin ring complex, implicated in the regulation of the microtubule-nucleating activity of the gamma-tubulin ring complex in centrosomes, in a kinase activity-dependent manner. Part of the dynein-decorated doublet microtubules (DMTs) in cilia axoneme, which is required for motile cilia beating. The chain is Nucleoside diphosphate kinase homolog 7 (Nme7) from Rattus norvegicus (Rat).